A 433-amino-acid polypeptide reads, in one-letter code: Serine hydroxymethyltransferase (433 aa).

(6S)-5,6,7,8-tetrahydrofolate-binding positions include Leu-127 and 131-133; that span reads GHL. Position 236 is an N6-(pyridoxal phosphate)lysine (Lys-236).

Belongs to the SHMT family. Homodimer. Pyridoxal 5'-phosphate serves as cofactor.

It is found in the cytoplasm. The catalysed reaction is (6R)-5,10-methylene-5,6,7,8-tetrahydrofolate + glycine + H2O = (6S)-5,6,7,8-tetrahydrofolate + L-serine. It participates in one-carbon metabolism; tetrahydrofolate interconversion. It functions in the pathway amino-acid biosynthesis; glycine biosynthesis; glycine from L-serine: step 1/1. Its function is as follows. Catalyzes the reversible interconversion of serine and glycine with tetrahydrofolate (THF) serving as the one-carbon carrier. This reaction serves as the major source of one-carbon groups required for the biosynthesis of purines, thymidylate, methionine, and other important biomolecules. Also exhibits THF-independent aldolase activity toward beta-hydroxyamino acids, producing glycine and aldehydes, via a retro-aldol mechanism. The polypeptide is Serine hydroxymethyltransferase (Corynebacterium urealyticum (strain ATCC 43042 / DSM 7109)).